Reading from the N-terminus, the 193-residue chain is Putative manganese efflux pump MntP (193 aa).

A run of 6 helical transmembrane segments spans residues 6 to 26 (VIFI…GIAC), 48 to 68 (AGMV…ISAF), 71 to 91 (WIAF…ALQG), 108 to 128 (LLGV…AFAV), 132 to 152 (NIGL…FLGF), and 165 to 185 (WVGV…LAEH).

The protein belongs to the MntP (TC 9.B.29) family.

It is found in the cell membrane. Functionally, probably functions as a manganese efflux pump. The protein is Putative manganese efflux pump MntP of Dehalococcoides mccartyi (strain ATCC BAA-2100 / JCM 16839 / KCTC 5957 / BAV1).